The primary structure comprises 483 residues: Serralysin (483 aa).

Position 184 (H184) interacts with Zn(2+). Residue E185 is part of the active site. Residues H188 and H194 each contribute to the Zn(2+) site. Ca(2+) is bound by residues R263, D266, D295, G297, G298, D300, T337, and E339. Hemolysin-type calcium-binding repeat units follow at residues 342 to 359 and 360 to 377; these read IGGS…ENIL and KGGA…ADQL.

This sequence belongs to the peptidase M10B family. Zn(2+) is required as a cofactor. It depends on Ca(2+) as a cofactor.

The protein resides in the secreted. The catalysed reaction is Preferential cleavage of bonds with hydrophobic residues in P1'.. With respect to regulation, inhibited by 8 mM 1,10-phenanthroline and 10 mM EDTA, but not by PMSF. In terms of biological role, involved in the inhibition of insect antibacterial peptides. Reduces the antibacterial activity of G.mellonella hemolymph by 50%. Reduces the antibacterial activity of cecropin A by 80% and cecropin B by 75%. In Photorhabdus sp. (strain Az29), this protein is Serralysin.